The chain runs to 449 residues: Asparagine--tRNA ligase (449 aa).

This sequence belongs to the class-II aminoacyl-tRNA synthetase family. As to quaternary structure, homodimer.

Its subcellular location is the cytoplasm. It catalyses the reaction tRNA(Asn) + L-asparagine + ATP = L-asparaginyl-tRNA(Asn) + AMP + diphosphate + H(+). The protein is Asparagine--tRNA ligase of Mesomycoplasma hyopneumoniae (strain J / ATCC 25934 / NCTC 10110) (Mycoplasma hyopneumoniae).